Consider the following 326-residue polypeptide: Malate dehydrogenase (326 aa).

11 to 17 (GAAGQIG) is an NAD(+) binding site. 2 residues coordinate substrate: arginine 92 and arginine 98. NAD(+)-binding positions include asparagine 105, glutamine 112, and 129 to 131 (VGN). Residues asparagine 131 and arginine 162 each contribute to the substrate site. The active-site Proton acceptor is histidine 187.

The protein belongs to the LDH/MDH superfamily. MDH type 2 family.

It carries out the reaction (S)-malate + NAD(+) = oxaloacetate + NADH + H(+). Catalyzes the reversible oxidation of malate to oxaloacetate. The polypeptide is Malate dehydrogenase (Leptospira borgpetersenii serovar Hardjo-bovis (strain JB197)).